A 184-amino-acid chain; its full sequence is Protein Iojap-related, mitochondrial (184 aa).

A mitochondrion-targeting transit peptide spans 1 to 39 (MLTTLRSRCSSLLLNQSWKLAPNRIFASSPSFSSSAGIS).

Belongs to the Iojap/RsfS family.

Its subcellular location is the mitochondrion. In terms of biological role, may be a ribosome silencing factor involved in organelle biogenesis and required for germination. This Arabidopsis thaliana (Mouse-ear cress) protein is Protein Iojap-related, mitochondrial.